Consider the following 371-residue polypeptide: Partitioning defective 6 homolog beta (371 aa).

A phosphoserine mark is found at serine 10 and serine 11. In terms of domain architecture, PB1 spans 16–96 (TMEVKSKFGA…PLLRIFIQKK (81 aa)). Residues 126 to 253 (RKKPHIVISM…ITVRPANQRN (128 aa)) form an interaction with PARD3 and CDC42 region. In terms of domain architecture, Pseudo-CRIB spans 133-150 (ISMPQDFRPVSSIIDVDI). Positions 157-250 (RVRLYKYGTE…NLIITVRPAN (94 aa)) constitute a PDZ domain. Disordered regions lie at residues 253-273 (NNVVRNSRTSGSSSQSTDNSL) and 326-371 (FESG…IITL). Positions 326–340 (FESGQNGFSPPQDTS) are enriched in polar residues. The span at 352 to 363 (LESRAPDQKLLE) shows a compositional bias: basic and acidic residues.

The protein belongs to the PAR6 family. As to quaternary structure, interacts with PARD3. Interacts with GTP-bound forms of CDC42, RHOQ/TC10 and RAC1. Interacts with the N-terminal part of PRKCI and PRKCZ. Part of a complex with PARD3, CDC42 or RAC1 and PRKCI or PRKCZ. Part of a complex with LLGL1 and PRKCI. Interacts with ALS2CR19. Interacts with ECT2. Interacts with PALS1. Expressed in pancreas and in both adult and fetal kidney. Weakly expressed in placenta and lung. Not expressed in other tissues.

The protein localises to the cytoplasm. Its subcellular location is the cell membrane. It localises to the cell junction. It is found in the tight junction. In terms of biological role, adapter protein involved in asymmetrical cell division and cell polarization processes. Probably involved in formation of epithelial tight junctions. Association with PARD3 may prevent the interaction of PARD3 with F11R/JAM1, thereby preventing tight junction assembly. The PARD6-PARD3 complex links GTP-bound Rho small GTPases to atypical protein kinase C proteins. This is Partitioning defective 6 homolog beta (Pard6b) from Mus musculus (Mouse).